We begin with the raw amino-acid sequence, 1106 residues long: Translation initiation factor IF-2 (1106 aa).

2 stretches are compositionally biased toward low complexity: residues 57–72 and 81–97; these read GKAA…PDAG and APST…SAPP. Disordered regions lie at residues 57-434 and 466-497; these read GKAA…QKVH and PSKP…RQRR. Composition is skewed to pro residues over residues 113-123 and 138-148; these read PAKPAPSAPPS. A compositionally biased stretch (low complexity) spans 172 to 199; the sequence is AKPVAKPASAPAPARPAQPLRPQASNRP. Composition is skewed to pro residues over residues 200 to 214 and 223 to 235; these read PQQP…PAAK and TAPP…PGAP. 3 stretches are compositionally biased toward low complexity: residues 251-292, 319-329, and 395-405; these read PNQQ…QQRR, PQGRQGGAPSR, and YRPAAAPGMAG. The segment covering 408 to 422 has biased composition (basic and acidic residues); the sequence is RRPDWDDSARLDALR. The segment covering 482-497 has biased composition (basic residues); that stretch reads ALRRRKKETTRQRQRR. The region spanning 598–771 is the tr-type G domain; sequence RRPPVVTVMG…LLVTEVEDLK (174 aa). The tract at residues 607 to 614 is G1; the sequence is GHVDHGKT. 607-614 is a binding site for GTP; sequence GHVDHGKT. Residues 632–636 form a G2 region; sequence GITQH. A G3 region spans residues 657–660; that stretch reads DTPG. GTP contacts are provided by residues 657–661 and 711–714; these read DTPGH and NKVD. The interval 711-714 is G4; that stretch reads NKVD. Residues 747 to 749 form a G5 region; it reads SAL.

It belongs to the TRAFAC class translation factor GTPase superfamily. Classic translation factor GTPase family. IF-2 subfamily.

The protein resides in the cytoplasm. One of the essential components for the initiation of protein synthesis. Protects formylmethionyl-tRNA from spontaneous hydrolysis and promotes its binding to the 30S ribosomal subunits. Also involved in the hydrolysis of GTP during the formation of the 70S ribosomal complex. This chain is Translation initiation factor IF-2, found in Synechococcus sp. (strain RCC307).